The primary structure comprises 564 residues: Hexose transporter HXT13 (564 aa).

Topologically, residues 1–52 (MSSAQSSIDSDGDVRDADIHVAPPVEKEWSDGFDDNEVINGDNVEPPKRGLI) are cytoplasmic. The helical transmembrane segment at 53–73 (GYLVIYLLCYPISFGGFLPGW) threads the bilayer. At 74–109 (DSGITAGFINMDNFKMNFGSYKHSTGEYYLSNVRMG) the chain is on the extracellular side. A helical transmembrane segment spans residues 110-130 (LLVAMFSIGCAIGGLIFARLA). Residues 131-136 (DTLGRR) are Cytoplasmic-facing. The chain crosses the membrane as a helical span at residues 137-157 (LAIVIVVLVYMVGAIIQISSN). Topologically, residues 158 to 167 (HKWYQYFVGK) are extracellular. Residues 168 to 188 (IIYGLGAGGCSVLCPMLLSEI) traverse the membrane as a helical segment. The Cytoplasmic segment spans residues 189–194 (APTDLR). A helical membrane pass occupies residues 195–215 (GGLVSLYQLNMTFGIFLGYCS). Topologically, residues 216–229 (VYGTRKYDNTAQWR) are extracellular. Residues 230–250 (VPLGLCFLWALIIIIGMLLVP) traverse the membrane as a helical segment. The Cytoplasmic segment spans residues 251-333 (ESPRYLIECE…VQTFLQLTGE (83 aa)). Residues 334–350 (NYFFFYGTTIFKSVGLT) traverse the membrane as a helical segment. At 351-356 (DGFETS) the chain is on the extracellular side. Residues 357-374 (IVLGTVNFFSTIIAVMVV) traverse the membrane as a helical segment. At 375 to 381 (DKIGRRK) the chain is on the cytoplasmic side. A helical transmembrane segment spans residues 382–402 (CLLFGAAGMMACMVIFASIGV). Over 403 to 424 (KCLYPHGQDGPSSKGAGNAMIV) the chain is Extracellular. Residues 425–445 (FTCFYIFCFATTWAPVAYIVV) traverse the membrane as a helical segment. Residues 446–462 (AESFPSKVKSRAMSIST) lie on the Cytoplasmic side of the membrane. The chain crosses the membrane as a helical span at residues 463–483 (ACNWLWQFLIGFFTPFITGSI). Residue H484 is a topological domain, extracellular. The chain crosses the membrane as a helical span at residues 485–505 (FYYGYVFVGCLVAMFLYVFFF). The Cytoplasmic segment spans residues 506–564 (LPETIGLSLEEIQLLYEEGIKPWKSASWVPPSRRGISSEESKTEKKDWKKFLKFSKNSD). Residues 530–551 (SASWVPPSRRGISSEESKTEKK) form a disordered region. The span at 541 to 551 (ISSEESKTEKK) shows a compositional bias: basic and acidic residues.

Belongs to the major facilitator superfamily. Sugar transporter (TC 2.A.1.1) family.

The protein localises to the membrane. Functionally, probable glucose transporter. In Saccharomyces cerevisiae (strain ATCC 204508 / S288c) (Baker's yeast), this protein is Hexose transporter HXT13 (HXT13).